Consider the following 543-residue polypeptide: Mitochondrial distribution and morphology protein 34 (543 aa).

The SMP-LTD domain maps to 1–202 (MSFNVNWNSL…LPTLLHKVSL (202 aa)). Residues 519–543 (AFSHNDPSITPFELPPPPYHQLSRA) are disordered.

The protein belongs to the MDM34 family. Component of the ER-mitochondria encounter structure (ERMES) or MDM complex, composed of MMM1, MDM10, MDM12 and MDM34.

The protein localises to the mitochondrion outer membrane. In terms of biological role, component of the ERMES/MDM complex, which serves as a molecular tether to connect the endoplasmic reticulum (ER) and mitochondria. Components of this complex are involved in the control of mitochondrial shape and protein biogenesis, and function in nonvesicular lipid trafficking between the ER and mitochondria. MDM34 is required for the interaction of the ER-resident membrane protein MMM1 and the outer mitochondrial membrane-resident beta-barrel protein MDM10. This Clavispora lusitaniae (strain ATCC 42720) (Yeast) protein is Mitochondrial distribution and morphology protein 34.